Reading from the N-terminus, the 265-residue chain is Type 1 encapsulin shell protein (265 aa).

This sequence belongs to the encapsulin family. Family 1 subfamily. As to quaternary structure, found in a complex with DyP, suggesting it is the native cargo protein. Monomers form pentamers, which assemble to form hollow shells composed of 60 subunits with several openings.

Its subcellular location is the encapsulin nanocompartment. It localises to the cell membrane. Functionally, shell component of a type 1 encapsulin nanocompartment. Assembles into proteinaceous shells 23-24 nm in diameter with 2-2.5 nm thick walls. Cargo protein DyP is targeted to the interior via its C-terminal extension; probably only 1 DyP hexamer is incorporated into each shell. Probably involved in protection against oxidative damage. In Mycolicibacterium paratuberculosis (strain ATCC BAA-968 / K-10) (Mycobacterium paratuberculosis), this protein is Type 1 encapsulin shell protein.